The chain runs to 395 residues: 3-sulfinopropanoyl-CoA desulfinase (395 aa).

Residues 121–124, serine 130, and 153–156 each bind FAD; these read ICIS and YWIT. 243 to 244 serves as a coordination point for substrate; the sequence is YN. Residues arginine 272, glutamine 339, serine 343, 366-370, and glutamine 387 each bind FAD; that span reads GGTAQ.

Belongs to the acyl-CoA dehydrogenase family. In terms of assembly, homotrimer or homotetramer. FAD is required as a cofactor.

The enzyme catalyses 3-sulfinopropanoyl-CoA + H2O = propanoyl-CoA + sulfite + H(+). In terms of biological role, catalyzes the conversion 3-sulfinopropanoyl-CoA (3SP-CoA) to propanoyl-CoA by abstraction of sulfite. Does not show dehydrogenase activity. The chain is 3-sulfinopropanoyl-CoA desulfinase from Cupriavidus necator (strain ATCC 43291 / DSM 13513 / CCUG 52238 / LMG 8453 / N-1) (Ralstonia eutropha).